We begin with the raw amino-acid sequence, 113 residues long: MSTITTSSVASSNGMRKNGKNWHDSKKPFRPTSGLTSYEKRLEARKLQEAVKEHEREMREEREAERKAQIQKIKDRRAAKEEKERYEKMAEKMHRKRVERLKRREKRNKLLHS.

Residues methionine 1–methionine 15 show a composition bias toward polar residues. The segment at methionine 1–serine 113 is disordered. The stretch at serine 37–arginine 100 forms a coiled coil. Basic and acidic residues predominate over residues tyrosine 38–lysine 92. Over residues methionine 93–serine 113 the composition is skewed to basic residues.

The protein belongs to the CGR1 family.

It is found in the nucleus. It localises to the nucleolus. Involved in nucleolar integrity and required for processing of the pre-rRNA for the 60S ribosome subunit. In Aspergillus clavatus (strain ATCC 1007 / CBS 513.65 / DSM 816 / NCTC 3887 / NRRL 1 / QM 1276 / 107), this protein is rRNA-processing protein cgrA (cgrA).